Consider the following 305-residue polypeptide: Large ribosomal subunit protein uL10 (305 aa).

The protein belongs to the universal ribosomal protein uL10 family. P0 forms a pentameric complex by interaction with dimers of P1 and P2. Phosphorylated.

Functionally, ribosomal protein P0 is the functional equivalent of E.coli protein L10. This Dictyostelium discoideum (Social amoeba) protein is Large ribosomal subunit protein uL10 (rplp0).